The chain runs to 256 residues: Galactitol 2-dehydrogenase (256 aa).

NAD(+) contacts are provided by residues R15–I17, D36, D59–V60, N86, Y152, and K156. The active-site Proton acceptor is the Y152.

This sequence belongs to the short-chain dehydrogenases/reductases (SDR) family.

The catalysed reaction is galactitol + NAD(+) = keto-D-tagatose + NADH + H(+). It catalyses the reaction keto-D-fructose + NADH + H(+) = D-sorbitol + NAD(+). The protein operates within carbohydrate metabolism. Functionally, involved in galactitol catabolism. Catalyzes the oxidation of galactitol to D-tagatose. Can also catalyze the oxidation of D-sorbitol to D-fructose. The polypeptide is Galactitol 2-dehydrogenase (Agrobacterium fabrum (strain C58 / ATCC 33970) (Agrobacterium tumefaciens (strain C58))).